A 565-amino-acid chain; its full sequence is NAD-dependent malic enzyme (565 aa).

Residue Tyr104 is the Proton donor of the active site. Position 157 (Arg157) interacts with NAD(+). Lys175 acts as the Proton acceptor in catalysis. Residues Glu246, Asp247, and Asp270 each coordinate a divalent metal cation. NAD(+)-binding residues include Asp270 and Asn418.

It belongs to the malic enzymes family. As to quaternary structure, homotetramer. Mg(2+) serves as cofactor. Requires Mn(2+) as cofactor.

It carries out the reaction (S)-malate + NAD(+) = pyruvate + CO2 + NADH. The catalysed reaction is oxaloacetate + H(+) = pyruvate + CO2. The polypeptide is NAD-dependent malic enzyme (Sodalis glossinidius (strain morsitans)).